We begin with the raw amino-acid sequence, 252 residues long: C4b-binding protein beta chain (252 aa).

An N-terminal signal peptide occupies residues 1-17 (MFFWCACCLMVAWRVSA). 3 Sushi domains span residues 21-78 (EHCP…ECRL), 79-136 (GHCP…ICKS), and 137-193 (RDCD…VCKL). 6 disulfide bridges follow: C23-C63, C49-C76, C81-C121, C107-C134, C139-C179, and C165-C191. 5 N-linked (GlcNAc...) asparagine glycosylation sites follow: N64, N71, N98, N117, and N154.

In terms of assembly, disulfide-linked complex of alpha and beta chains of 3 possible sorts: a 570 kDa complex of 7 alpha chains and 1 beta chain, a 530 kDa homoheptamer of alpha chains or a 500 kDa complex of 6 alpha chains and 1 beta chain. The central body of the alpha chain homomer supports tentacles, each with the binding site for C4b at the end.

Its subcellular location is the secreted. Functionally, controls the classical pathway of complement activation. It binds as a cofactor to C3b/C4b inactivator (C3bINA), which then hydrolyzes the complement fragment C4b. It also accelerates the degradation of the C4bC2a complex (C3 convertase) by dissociating the complement fragment C2a. It also interacts with anticoagulant protein S and with serum amyloid P component. The beta chain binds protein S. This is C4b-binding protein beta chain (C4BPB) from Homo sapiens (Human).